The sequence spans 111 residues: Small ribosomal subunit protein bS16 (111 aa).

This sequence belongs to the bacterial ribosomal protein bS16 family.

This chain is Small ribosomal subunit protein bS16, found in Rickettsia prowazekii (strain Madrid E).